The primary structure comprises 382 residues: Dual-specificity RNA methyltransferase RlmN (382 aa).

Glu-94 (proton acceptor) is an active-site residue. Residues 100 to 336 form the Radical SAM core domain; it reads EANRGTLCVS…NTITRKTRGD (237 aa). Cys-107 and Cys-342 are joined by a disulfide. Residues Cys-114, Cys-118, and Cys-121 each coordinate [4Fe-4S] cluster. Residues 168–169, Ser-200, 222–224, and Asn-299 each bind S-adenosyl-L-methionine; these read GE and SLH. The S-methylcysteine intermediate role is filled by Cys-342.

The protein belongs to the radical SAM superfamily. RlmN family. It depends on [4Fe-4S] cluster as a cofactor.

It localises to the cytoplasm. It catalyses the reaction adenosine(2503) in 23S rRNA + 2 reduced [2Fe-2S]-[ferredoxin] + 2 S-adenosyl-L-methionine = 2-methyladenosine(2503) in 23S rRNA + 5'-deoxyadenosine + L-methionine + 2 oxidized [2Fe-2S]-[ferredoxin] + S-adenosyl-L-homocysteine. It carries out the reaction adenosine(37) in tRNA + 2 reduced [2Fe-2S]-[ferredoxin] + 2 S-adenosyl-L-methionine = 2-methyladenosine(37) in tRNA + 5'-deoxyadenosine + L-methionine + 2 oxidized [2Fe-2S]-[ferredoxin] + S-adenosyl-L-homocysteine. In terms of biological role, specifically methylates position 2 of adenine 2503 in 23S rRNA and position 2 of adenine 37 in tRNAs. m2A2503 modification seems to play a crucial role in the proofreading step occurring at the peptidyl transferase center and thus would serve to optimize ribosomal fidelity. The protein is Dual-specificity RNA methyltransferase RlmN of Legionella pneumophila (strain Lens).